The sequence spans 85 residues: Alpha-mammal toxin AaH2 (85 aa).

Residues 1–19 (MNYLVMISLALLFVTGVES) form the signal peptide. An LCN-type CS-alpha/beta domain is found at 21–83 (KDGYIVDDVN…VRTKGPGRCH (63 aa)). Intrachain disulfides connect Cys-31–Cys-82, Cys-35–Cys-55, Cys-41–Cys-65, and Cys-45–Cys-67. His-83 is subject to Histidine amide.

The protein belongs to the long (4 C-C) scorpion toxin superfamily. Sodium channel inhibitor family. Alpha subfamily. The amidation of His-83 is not necessary for toxicity. As to expression, expressed by the venom gland.

Its subcellular location is the secreted. Its function is as follows. Alpha toxin that binds voltage-independently at site-3 of sodium channels (Nav), inhibits the inactivation of the activated channels, and weakly inhibits activation, thereby blocking neuronal transmission. Inserts into voltage-sensing domain IV to stabilize a deactivated state, thereby preventing fast-inactivation. Principally slows the inactivation process of TTX-sensitive sodium channels. It is active on mammalian brain Nav1.2/SCN2A (EC(50)human=0.72 nM, EC(50)rat=2.6 nM), on rat skeletal muscle Nav1.4/SCN4A (EC(50)=2.2 nM), and on human neuronal Nav1.7/SCN9A (EC(50)=6.8-51.7 nM). In vivo, intraplantar injection into mice induces spontaneous pain responses. This chain is Alpha-mammal toxin AaH2, found in Androctonus australis (Sahara scorpion).